A 342-amino-acid chain; its full sequence is Flagellar P-ring protein (342 aa).

An N-terminal signal peptide occupies residues 1-19 (MKRVFLWLIFVLAFHKLLA).

Belongs to the FlgI family. As to quaternary structure, the basal body constitutes a major portion of the flagellar organelle and consists of four rings (L,P,S, and M) mounted on a central rod.

The protein resides in the periplasm. Its subcellular location is the bacterial flagellum basal body. Its function is as follows. Assembles around the rod to form the L-ring and probably protects the motor/basal body from shearing forces during rotation. This Helicobacter pylori (strain P12) protein is Flagellar P-ring protein.